A 737-amino-acid chain; its full sequence is Methylcrotonoyl-CoA carboxylase subunit alpha, mitochondrial (737 aa).

The transit peptide at 1–33 (MASRLLLLPRRRSRHGGASLLLARLLSSSSSEA) directs the protein to the mitochondrion. Residues 38-485 (AVEKVLVANR…DTHFIERYQN (448 aa)) enclose the Biotin carboxylation domain. ATP is bound by residues K153, 185-246 (ANKI…PRHI), E237, and H272. In terms of domain architecture, ATP-grasp spans 157-355 (KRIMGAAGVP…LVEWQIRIAN (199 aa)). 3 residues coordinate Mn(2+): E312, E326, and N328. R330 is a catalytic residue. Residues 636-665 (YRQTLRAEQSPDDSSQPSASSEARSHPKGS) form a disordered region. Residues 647 to 657 (DDSSQPSASSE) are compositionally biased toward low complexity. The Biotinyl-binding domain occupies 656–732 (SEARSHPKGS…FDSSVLFTVK (77 aa)). K698 is subject to N6-biotinyllysine.

In terms of assembly, probably a heterodimer composed of biotin-containing alpha subunits and beta subunits. Requires biotin as cofactor. Mn(2+) is required as a cofactor.

It is found in the mitochondrion matrix. The catalysed reaction is 3-methylbut-2-enoyl-CoA + hydrogencarbonate + ATP = 3-methyl-(2E)-glutaconyl-CoA + ADP + phosphate + H(+). Its pathway is amino-acid degradation; L-leucine degradation; (S)-3-hydroxy-3-methylglutaryl-CoA from 3-isovaleryl-CoA: step 2/3. In terms of biological role, biotin-attachment subunit of the 3-methylcrotonyl-CoA carboxylase, an enzyme that catalyzes the conversion of 3-methylcrotonyl-CoA to 3-methylglutaconyl-CoA, a critical step for leucine and isovaleric acid catabolism. The sequence is that of Methylcrotonoyl-CoA carboxylase subunit alpha, mitochondrial (MCCA) from Oryza sativa subsp. japonica (Rice).